A 134-amino-acid polypeptide reads, in one-letter code: Large ribosomal subunit protein uL16c (134 aa).

Residues 1-17 (MLSPKRTRFRKQHRGRM) are compositionally biased toward basic residues. Residues 1–22 (MLSPKRTRFRKQHRGRMKGISS) are disordered.

It belongs to the universal ribosomal protein uL16 family. In terms of assembly, part of the 50S ribosomal subunit.

It is found in the plastid. Its subcellular location is the chloroplast. This Solanum tuberosum (Potato) protein is Large ribosomal subunit protein uL16c.